The following is a 225-amino-acid chain: C-reactive protein (225 aa).

The N-terminal stretch at 1 to 19 (MEKLLWCSLVMIGFSQAFA) is a signal peptide. Gln-20 is subject to Pyrrolidone carboxylic acid. The Pentraxin (PTX) domain maps to 24–225 (SKTAFVFPKE…DVFIKPQLWP (202 aa)). Cysteines 55 and 116 form a disulfide. Positions 80, 157, 158, 159, and 169 each coordinate Ca(2+).

The protein belongs to the pentraxin family. Homopentamer. Pentraxin (or pentaxin) have a discoid arrangement of 5 non-covalently bound subunits. Interacts with FCN1; may regulate monocyte activation by FCN1. It depends on Ca(2+) as a cofactor. Found in plasma.

Its subcellular location is the secreted. Functionally, displays several functions associated with host defense: it promotes agglutination, bacterial capsular swelling, phagocytosis and complement fixation through its calcium-dependent binding to phosphorylcholine. Can interact with DNA and histones and may scavenge nuclear material released from damaged circulating cells. The polypeptide is C-reactive protein (CRP) (Mesocricetus auratus (Golden hamster)).